Consider the following 662-residue polypeptide: Methyl-accepting chemotaxis protein TlpB (662 aa).

At 1-16 (MGKFIQWIKQPSISKP) the chain is on the cytoplasmic side. A helical transmembrane segment spans residues 17–37 (LIAAFLAVLILPVGVLAYFSY). Topologically, residues 38–281 (QSAWNALDRE…LQDASSPVLN (244 aa)) are extracellular. One can recognise a Cache domain in the interval 153 to 228 (SEPYTDEATG…KPGTTGSGDW (76 aa)). A helical transmembrane segment spans residues 282 to 302 (TAVIILCVSIVIGGILILYII). The HAMP domain maps to 303-355 (RAITKPLRKLVSTSAKISSGDLTEVIDIHSKNEFGQLGESFNEMSASLRSVIG). The Cytoplasmic segment spans residues 303–662 (RAITKPLRKL…DITKKFKIES (360 aa)). Position 370 is a glutamate methyl ester (Glu) (E370). The 237-residue stretch at 374–610 (SAAQTSKATE…EVSSAVEDIS (237 aa)) folds into the Methyl-accepting transducer domain. A Glutamate methyl ester (Gln) modification is found at Q594. Glutamate methyl ester (Glu) occurs at positions 629 and 636.

The protein belongs to the methyl-accepting chemotaxis (MCP) protein family.

The protein localises to the cell membrane. Chemotactic-signal transducers respond to changes in the concentration of attractants and repellents in the environment, transduce a signal from the outside to the inside of the cell, and facilitate sensory adaptation through the variation of the level of methylation. All amino acids serve as attractants in B.subtilis, they appear to cause an increase in the turnover methyl groups, leading to methylation of an unidentified acceptor, while repellents have been shown to cause a decrease in methyl group turnover. The methyl groups are added by a methyltransferase and removed by a methylesterase. The sequence is that of Methyl-accepting chemotaxis protein TlpB (tlpB) from Bacillus subtilis (strain 168).